A 985-amino-acid polypeptide reads, in one-letter code: Probable beta-galactosidase C (985 aa).

The first 23 residues, 1–23 (MRILSLLFLLLLGFLAGNRVVSA), serve as a signal peptide directing secretion. Substrate-binding residues include Tyr82, Asn127, Ala128, Glu129, and Asn187. Glu188 (proton donor) is an active-site residue. A substrate-binding site is contributed by Tyr251. Cys257 and Cys304 are disulfide-bonded. Residue Asn276 is glycosylated (N-linked (GlcNAc...) asparagine). The active-site Nucleophile is Glu287. Tyr353 serves as a coordination point for substrate. Residues Asn391, Asn434, Asn517, Asn602, Asn677, Asn715, Asn720, and Asn759 are each glycosylated (N-linked (GlcNAc...) asparagine).

This sequence belongs to the glycosyl hydrolase 35 family.

The protein localises to the secreted. It catalyses the reaction Hydrolysis of terminal non-reducing beta-D-galactose residues in beta-D-galactosides.. In terms of biological role, cleaves beta-linked terminal galactosyl residues from gangliosides, glycoproteins, and glycosaminoglycans. This chain is Probable beta-galactosidase C (lacC), found in Aspergillus clavatus (strain ATCC 1007 / CBS 513.65 / DSM 816 / NCTC 3887 / NRRL 1 / QM 1276 / 107).